We begin with the raw amino-acid sequence, 337 residues long: Ketol-acid reductoisomerase (NADP(+)) (337 aa).

In terms of domain architecture, KARI N-terminal Rossmann spans 1 to 181 (MKIYYEHDAD…GAARAGVIAT (181 aa)). NADP(+)-binding positions include 24–27 (FGSQ), Arg47, Ser50, Ser52, and 82–85 (DEKQ). The active site involves His107. Gly133 is a binding site for NADP(+). The region spanning 182 to 328 (TFKDETETDL…SRLRAMMPFL (147 aa)) is the KARI C-terminal knotted domain. Positions 190, 194, 226, and 230 each coordinate Mg(2+). Ser251 serves as a coordination point for substrate.

It belongs to the ketol-acid reductoisomerase family. Mg(2+) is required as a cofactor.

The enzyme catalyses (2R)-2,3-dihydroxy-3-methylbutanoate + NADP(+) = (2S)-2-acetolactate + NADPH + H(+). It carries out the reaction (2R,3R)-2,3-dihydroxy-3-methylpentanoate + NADP(+) = (S)-2-ethyl-2-hydroxy-3-oxobutanoate + NADPH + H(+). It functions in the pathway amino-acid biosynthesis; L-isoleucine biosynthesis; L-isoleucine from 2-oxobutanoate: step 2/4. It participates in amino-acid biosynthesis; L-valine biosynthesis; L-valine from pyruvate: step 2/4. In terms of biological role, involved in the biosynthesis of branched-chain amino acids (BCAA). Catalyzes an alkyl-migration followed by a ketol-acid reduction of (S)-2-acetolactate (S2AL) to yield (R)-2,3-dihydroxy-isovalerate. In the isomerase reaction, S2AL is rearranged via a Mg-dependent methyl migration to produce 3-hydroxy-3-methyl-2-ketobutyrate (HMKB). In the reductase reaction, this 2-ketoacid undergoes a metal-dependent reduction by NADPH to yield (R)-2,3-dihydroxy-isovalerate. This is Ketol-acid reductoisomerase (NADP(+)) from Thermus thermophilus (strain ATCC BAA-163 / DSM 7039 / HB27).